A 281-amino-acid chain; its full sequence is Merozoite surface protein 2 (281 aa).

Residues 1–20 form the signal peptide; the sequence is MKVIKTLSIINFFIFVTFNI. Residues Asn22 and Asn36 are each glycosylated (N-linked (GlcNAc...) asparagine). The interval 42-242 is disordered; that stretch reads SMEESNPPTG…DSQKECTDGN (201 aa). The segment at 44 to 207 is polymorphic region; that stretch reads EESNPPTGAS…EQTESPELQS (164 aa). Repeat copies occupy residues 51 to 58, 59 to 66, and 67 to 74. Residues 51–74 form a 3 X 8 AA tandem repeats of G-A-S-G-R-A-G-A region; sequence GASGRAGAGASGRAGAGASGRAGA. Residues 54 to 76 are compositionally biased toward gly residues; the sequence is GRAGAGASGRAGAGASGRAGAGA. A compositionally biased stretch (low complexity) spans 77 to 133; the sequence is GAVASAGSGDGAVASAGNGANPGADAKRSTSTPATTTTTTTTNDAEASTSTSSENPN. Composition is skewed to polar residues over residues 150–174 and 181–209; these read NKANTETQNNSNVQQDSQTKSNVPP and KSPTAQPEQAENSAPTAEQTESPELQSAP. Asn158 carries an N-linked (GlcNAc...) asparagine glycan. The N-linked (GlcNAc...) asparagine glycan is linked to Asn230. An intrachain disulfide couples Cys238 to Cys246. Asn254 and Asn255 each carry an N-linked (GlcNAc...) asparagine glycan. Asn255 is lipidated: GPI-anchor amidated asparagine. A propeptide spans 256 to 281 (removed in mature form); the sequence is SSNIASINKFVVLISATLVLSFAIFI.

The protein resides in the cell membrane. Functionally, may play a role in the merozoite attachment to the erythrocyte. The sequence is that of Merozoite surface protein 2 from Plasmodium falciparum (isolate thtn / Thailand).